Consider the following 362-residue polypeptide: Molybdenum import ATP-binding protein ModC (362 aa).

An ABC transporter domain is found at 4–238 (AGEAAIRARF…LDLPIRLGED (235 aa)). 38–45 (GHSGSGKT) is an ATP binding site. A Mop domain is found at 297–362 (GTSILNTLPA…AQIKAVALVG (66 aa)).

Belongs to the ABC transporter superfamily. Molybdate importer (TC 3.A.1.8) family. As to quaternary structure, the complex is composed of two ATP-binding proteins (ModC), two transmembrane proteins (ModB) and a solute-binding protein (ModA).

Its subcellular location is the cell inner membrane. It catalyses the reaction molybdate(out) + ATP + H2O = molybdate(in) + ADP + phosphate + H(+). Its function is as follows. Part of the ABC transporter complex ModABC involved in molybdenum import. Responsible for energy coupling to the transport system. This is Molybdenum import ATP-binding protein ModC from Thiobacillus denitrificans (strain ATCC 25259 / T1).